A 343-amino-acid chain; its full sequence is Heat-inducible transcription repressor HrcA (343 aa).

The protein belongs to the HrcA family.

Functionally, negative regulator of class I heat shock genes (grpE-dnaK-dnaJ and groELS operons). Prevents heat-shock induction of these operons. The chain is Heat-inducible transcription repressor HrcA from Bacillus pumilus (strain SAFR-032).